The following is a 94-amino-acid chain: DNA-directed RNA polymerase subunit omega (94 aa).

It belongs to the RNA polymerase subunit omega family. In terms of assembly, the RNAP catalytic core consists of 2 alpha, 1 beta, 1 beta' and 1 omega subunit. When a sigma factor is associated with the core the holoenzyme is formed, which can initiate transcription.

It carries out the reaction RNA(n) + a ribonucleoside 5'-triphosphate = RNA(n+1) + diphosphate. Its function is as follows. Promotes RNA polymerase assembly. Latches the N- and C-terminal regions of the beta' subunit thereby facilitating its interaction with the beta and alpha subunits. This Frankia casuarinae (strain DSM 45818 / CECT 9043 / HFP020203 / CcI3) protein is DNA-directed RNA polymerase subunit omega.